Here is a 290-residue protein sequence, read N- to C-terminus: 33 kDa chaperonin (290 aa).

Disulfide bonds link C231/C233 and C264/C267.

The protein belongs to the HSP33 family. In terms of processing, under oxidizing conditions two disulfide bonds are formed involving the reactive cysteines. Under reducing conditions zinc is bound to the reactive cysteines and the protein is inactive.

It is found in the cytoplasm. Redox regulated molecular chaperone. Protects both thermally unfolding and oxidatively damaged proteins from irreversible aggregation. Plays an important role in the bacterial defense system toward oxidative stress. The sequence is that of 33 kDa chaperonin from Photorhabdus laumondii subsp. laumondii (strain DSM 15139 / CIP 105565 / TT01) (Photorhabdus luminescens subsp. laumondii).